Consider the following 483-residue polypeptide: Phloretin 2'-O-glucosyltransferase (483 aa).

The active-site Proton acceptor is the His15. His15 serves as a coordination point for an anthocyanidin. Residue Asp118 is the Charge relay of the active site. Positions 140, 360, 362, 377, 380, 381, 382, and 385 each coordinate UDP-alpha-D-glucose. Ala400 contributes to the an anthocyanidin binding site. UDP-alpha-D-glucose-binding residues include Glu401 and Gln402.

This sequence belongs to the UDP-glycosyltransferase family. In terms of tissue distribution, highly expressed in roots and at lower levels in leaves, flowers and fruits.

It catalyses the reaction phloretin + UDP-alpha-D-glucose = phlorizin + UDP + H(+). Glycosyltransferase that possesses phloretin 2'-O-glycosyltransferase activity. Converts phloretin to phlorizin (phloretin 2'-O-glucoside), a potent antioxidant. Is specific for phloretin and does not possess glycosyltransferase activity toward caffeic acid, catechin, chlorogenic acid, 2-coumaric acid, 3-coumaric acid, 4-coumaric acid, cyanidin, 3,4-dihydroxyhydrocinnamic acid, epicatechin, 3-hydroxybenzoic acid, naringenin, 3,4-dihydroxybenzoic acid, quercetin and rutin. Can glycosylate phloretin in the presence of UDP-glucose, UDP-xylose and UDP-galactose. The sequence is that of Phloretin 2'-O-glucosyltransferase from Malus domestica (Apple).